The primary structure comprises 77 residues: Cell division topological specificity factor (77 aa).

It belongs to the MinE family.

Prevents the cell division inhibition by proteins MinC and MinD at internal division sites while permitting inhibition at polar sites. This ensures cell division at the proper site by restricting the formation of a division septum at the midpoint of the long axis of the cell. The polypeptide is Cell division topological specificity factor (Helicobacter acinonychis (strain Sheeba)).